A 121-amino-acid polypeptide reads, in one-letter code: MTKEQIIEAVKNMTVLELNDLVKAIEEEFGVTAAAPVVVAGGAAAGAAAEEKTEFDVILADGGAQKIKVIKVVRELTGLGLKEAKDLVDNTPKPVKEGVSKEEAEEIKAKLEEAGAKVEIK.

Belongs to the bacterial ribosomal protein bL12 family. As to quaternary structure, homodimer. Part of the ribosomal stalk of the 50S ribosomal subunit. Forms a multimeric L10(L12)X complex, where L10 forms an elongated spine to which 2 to 4 L12 dimers bind in a sequential fashion. Binds GTP-bound translation factors.

Forms part of the ribosomal stalk which helps the ribosome interact with GTP-bound translation factors. Is thus essential for accurate translation. The protein is Large ribosomal subunit protein bL12 of Anoxybacillus flavithermus (strain DSM 21510 / WK1).